A 168-amino-acid chain; its full sequence is uncharacterized protein (168 aa).

The helical transmembrane segment at 5–24 threads the bilayer; sequence IAWASACLLLVMLTGFFTIG.

The protein localises to the membrane. This is an uncharacterized protein from Bacillus subtilis (strain 168).